The chain runs to 326 residues: Probable GTP 3',8-cyclase (326 aa).

The region spanning 6–235 is the Radical SAM core domain; that stretch reads LYGRPVLSLR…NRPRYIIRTQ (230 aa). Residue Arg15 participates in GTP binding. Cys22, Cys26, and Cys29 together coordinate [4Fe-4S] cluster. Lys62 is a binding site for GTP. Gly66 serves as a coordination point for S-adenosyl-L-methionine. Residue Thr92 participates in GTP binding. Ser116 provides a ligand contact to S-adenosyl-L-methionine. Position 153 (Lys153) interacts with GTP. Residues Cys253 and Cys256 each contribute to the [4Fe-4S] cluster site. 258–260 contributes to the GTP binding site; that stretch reads RLR. Cys270 lines the [4Fe-4S] cluster pocket.

It belongs to the radical SAM superfamily. MoaA family. It depends on [4Fe-4S] cluster as a cofactor.

It carries out the reaction GTP + AH2 + S-adenosyl-L-methionine = (8S)-3',8-cyclo-7,8-dihydroguanosine 5'-triphosphate + 5'-deoxyadenosine + L-methionine + A + H(+). It functions in the pathway cofactor biosynthesis; molybdopterin biosynthesis. Its function is as follows. Catalyzes the cyclization of GTP to (8S)-3',8-cyclo-7,8-dihydroguanosine 5'-triphosphate. This Thermoplasma volcanium (strain ATCC 51530 / DSM 4299 / JCM 9571 / NBRC 15438 / GSS1) protein is Probable GTP 3',8-cyclase.